The following is a 211-amino-acid chain: 3-demethoxyubiquinol 3-hydroxylase (211 aa).

The tract at residues 22–43 is disordered; that stretch reads KHPLNPNRKSPSANTVDGQLSD. Polar residues predominate over residues 28-42; it reads NRKSPSANTVDGQLS. 6 residues coordinate Fe cation: Glu60, Glu90, His93, Glu142, Glu174, and His177.

This sequence belongs to the COQ7 family. Fe cation is required as a cofactor.

It is found in the cell membrane. It catalyses the reaction a 5-methoxy-2-methyl-3-(all-trans-polyprenyl)benzene-1,4-diol + AH2 + O2 = a 3-demethylubiquinol + A + H2O. Its pathway is cofactor biosynthesis; ubiquinone biosynthesis. Catalyzes the hydroxylation of 2-nonaprenyl-3-methyl-6-methoxy-1,4-benzoquinol during ubiquinone biosynthesis. The sequence is that of 3-demethoxyubiquinol 3-hydroxylase from Francisella philomiragia subsp. philomiragia (strain ATCC 25017 / CCUG 19701 / FSC 153 / O#319-036).